A 149-amino-acid polypeptide reads, in one-letter code: Myoglobin (149 aa).

Alanine 2 carries the N-acetylalanine modification. In terms of domain architecture, Globin spans 2–143 (ABWDKVNSVW…ICSDIEKEYK (142 aa)). Position 89 (histidine 89) interacts with heme b.

Belongs to the globin family. Monomeric.

The protein localises to the cytoplasm. It localises to the sarcoplasm. It carries out the reaction Fe(III)-heme b-[protein] + nitric oxide + H2O = Fe(II)-heme b-[protein] + nitrite + 2 H(+). The enzyme catalyses H2O2 + AH2 = A + 2 H2O. Functionally, monomeric heme protein which primary function is to store oxygen and facilitate its diffusion within muscle tissues. Reversibly binds oxygen through a pentacoordinated heme iron and enables its timely and efficient release as needed during periods of heightened demand. Depending on the oxidative conditions of tissues and cells, and in addition to its ability to bind oxygen, it also has a nitrite reductase activity whereby it regulates the production of bioactive nitric oxide. Under stress conditions, like hypoxia and anoxia, it also protects cells against reactive oxygen species thanks to its pseudoperoxidase activity. This chain is Myoglobin (mb), found in Hemitriakis japanica (Japanese topeshark).